The sequence spans 109 residues: Aquaporin-2 (109 aa).

Over 1 to 6 (SVAFSR) the chain is Cytoplasmic. A helical transmembrane segment spans residues 7–27 (AVFAEFLATLLFVFFGLGSAL). The Extracellular portion of the chain corresponds to 28–35 (NWPQALPS). A helical transmembrane segment spans residues 36–54 (VLQIAMAFGLGIGTLVQAL). Residues 55 to 59 (GHVSG) lie on the Cytoplasmic side of the membrane. Residues 60–69 (AHINPAVTVA) constitute an intramembrane region (discontinuously helical). The short motif at 63–65 (NPA) is the NPA 1 element. At 70–80 (CLVGCHVSFLR) the chain is on the cytoplasmic side. A helical transmembrane segment spans residues 81-102 (AAFYVAAQLLGAVAGAALLHEI). The Extracellular portion of the chain corresponds to 103–109 (TPPHVRG).

The protein belongs to the MIP/aquaporin (TC 1.A.8) family. In terms of assembly, homotetramer. Post-translationally, serine phosphorylation is necessary and sufficient for expression at the apical membrane. Endocytosis is not phosphorylation-dependent. N-glycosylated.

It localises to the apical cell membrane. Its subcellular location is the basolateral cell membrane. It is found in the cell membrane. The protein resides in the cytoplasmic vesicle membrane. The protein localises to the golgi apparatus. It localises to the trans-Golgi network membrane. The catalysed reaction is H2O(in) = H2O(out). It carries out the reaction glycerol(in) = glycerol(out). In terms of biological role, forms a water-specific channel that provides the plasma membranes of renal collecting duct with high permeability to water, thereby permitting water to move in the direction of an osmotic gradient. Plays an essential role in renal water homeostasis. Could also be permeable to glycerol. The polypeptide is Aquaporin-2 (Canis lupus familiaris (Dog)).